A 1545-amino-acid chain; its full sequence is ATP-binding cassette sub-family C member 2 (1545 aa).

Residues 1-27 lie on the Extracellular side of the membrane; the sequence is MLEKFCNSTFWNSSFLDSPEADLPLCF. 2 N-linked (GlcNAc...) asparagine glycosylation sites follow: asparagine 7 and asparagine 12. A helical transmembrane segment spans residues 28–48; the sequence is EQTVLVWIPLGYLWLLAPWQL. The Cytoplasmic segment spans residues 49-68; sequence LHVYKSRTKRSSTTKLYLAK. Residues 69-89 form a helical membrane-spanning segment; it reads QVFVGFLLILAAIELALVLTE. At 90 to 93 the chain is on the extracellular side; that stretch reads DSGQ. A helical membrane pass occupies residues 94–114; sequence ATVPAVRYTNPSLYLGTWLLV. Over 115–126 the chain is Cytoplasmic; it reads LLIQYSRQWCVQ. The helical transmembrane segment at 127–147 threads the bilayer; it reads KNSWFLSLFWILSILCGTFQF. At 148–165 the chain is on the extracellular side; the sequence is QTLIRTLLQGDNSNLAYS. A helical transmembrane segment spans residues 166 to 186; sequence CLFFISYGFQILILIFSAFSE. The Cytoplasmic segment spans residues 187-313; it reads NNESSNNPSS…DVPKSWLMKA (127 aa). The segment at 253–284 is disordered; that stretch reads ARRALQRRQEKSSQQNSGARLPGLNKNQSQSQ. 2 positions are modified to phosphoserine: serine 281 and serine 283. A helical membrane pass occupies residues 314–334; the sequence is LFKTFYMVLLKSFLLKLVNDI. One can recognise an ABC transmembrane type-1 1 domain in the interval 322–605; that stretch reads LLKSFLLKLV…LPMMISSMLQ (284 aa). At 335–360 the chain is on the extracellular side; that stretch reads FTFVSPQLLKLLISFASDRDTYLWIG. A helical membrane pass occupies residues 361–381; sequence YLCAILLFTAALIQSFCLQCY. The Cytoplasmic segment spans residues 382–437; the sequence is FQLCFKLGVKVRTAIMASVYKKALTLSNLARKEYTVGETVNLMSVDAQKLMDVTNF. Residues 438 to 458 traverse the membrane as a helical segment; the sequence is MHMLWSSVLQIVLSIFFLWRE. The Extracellular portion of the chain corresponds to 459–461; that stretch reads LGP. A helical membrane pass occupies residues 462–482; it reads SVLAGVGVMVLVIPINAILST. Residues 483 to 544 are Cytoplasmic-facing; sequence KSKTIQVKNM…NLLAFSQLQC (62 aa). The chain crosses the membrane as a helical span at residues 545 to 565; that stretch reads VVIFVFQLTPVLVSVVTFSVY. The Extracellular segment spans residues 566-587; that stretch reads VLVDSNNILDAQKAFTSITLFN. Residues 588-608 traverse the membrane as a helical segment; it reads ILRFPLSMLPMMISSMLQASV. At 609–971 the chain is on the cytoplasmic side; the sequence is STERLEKYLG…VKFSIYLEYL (363 aa). The 225-residue stretch at 637–861 folds into the ABC transporter 1 domain; that stretch reads MQFSEASFTW…KGEFAKNLKT (225 aa). 671-678 is an ATP binding site; sequence GPVGSGKS. Phosphoserine occurs at positions 878, 926, 930, and 938. The chain crosses the membrane as a helical span at residues 972-992; that stretch reads QAIGLFSIFFIILAFVMNSVA. The ABC transmembrane type-1 2 domain occupies 979-1264; the sequence is IFFIILAFVM…LVRMTSEIET (286 aa). At 993-1033 the chain is on the extracellular side; sequence FIGSNLWLSAWTSDSKIFNSTDYPASQRDMRVGVYGALGLA. A glycan (N-linked (GlcNAc...) asparagine) is linked at asparagine 1011. The chain crosses the membrane as a helical span at residues 1034-1054; the sequence is QGIFVFIAHFWSAFGFVHASN. At 1055 to 1097 the chain is on the cytoplasmic side; it reads ILHKQLLNNILRAPMRFFDTTPTGRIVNRFAGDISTVDDTLPQ. The helical transmembrane segment at 1098–1118 threads the bilayer; that stretch reads SLRSWITCFLGIISTLVMICM. Alanine 1119 is a topological domain (extracellular). Residues 1120-1140 traverse the membrane as a helical segment; sequence TPVFTIIVIPLGIIYVSVQMF. The Cytoplasmic segment spans residues 1141 to 1211; sequence YVSTSRQLRR…TSNRWLAIRL (71 aa). The chain crosses the membrane as a helical span at residues 1212 to 1232; that stretch reads ELVGNLTVFFSALMMVIYRDT. Topologically, residues 1233–1234 are extracellular; that stretch reads LS. A helical membrane pass occupies residues 1235–1255; that stretch reads GDTVGFVLSNALNITQTLNWL. The Cytoplasmic portion of the chain corresponds to 1256 to 1545; the sequence is VRMTSEIETN…GIENVNSTKF (290 aa). The 235-residue stretch at 1300 to 1534 folds into the ABC transporter 2 domain; the sequence is IQFNNYQVRY…PGPFYFMAKE (235 aa). 1334 to 1341 provides a ligand contact to ATP; it reads GRTGAGKS. Phosphoserine is present on serine 1438.

The protein belongs to the ABC transporter superfamily. ABCC family. Conjugate transporter (TC 3.A.1.208) subfamily. Expressed by polarized cells in liver, kidney and intestine. The highest expression is found in liver. Expressed in small intestine.

Its subcellular location is the apical cell membrane. The catalysed reaction is ATP + H2O + xenobioticSide 1 = ADP + phosphate + xenobioticSide 2.. The enzyme catalyses an S-substituted glutathione(in) + ATP + H2O = an S-substituted glutathione(out) + ADP + phosphate + H(+). It carries out the reaction taurolithocholate 3-sulfate(in) + ATP + H2O = taurolithocholate 3-sulfate(out) + ADP + phosphate + H(+). It catalyses the reaction leukotriene C4(in) + ATP + H2O = leukotriene C4(out) + ADP + phosphate + H(+). The catalysed reaction is 17beta-estradiol 17-O-(beta-D-glucuronate)(in) + ATP + H2O = 17beta-estradiol 17-O-(beta-D-glucuronate)(out) + ADP + phosphate + H(+). The enzyme catalyses (4Z,15Z)-bilirubin IXalpha C8-beta-D-glucuronoside(in) + ATP + H2O = (4Z,15Z)-bilirubin IXalpha C8-beta-D-glucuronoside(out) + ADP + phosphate + H(+). It carries out the reaction (4Z,15Z)-bilirubin IXalpha C8,C12-beta-D-bisglucuronoside(in) + ATP + H2O = (4Z,15Z)-bilirubin IXalpha C8,C12-beta-D-bisglucuronoside(out) + ADP + phosphate + H(+). Functionally, ATP-dependent transporter of the ATP-binding cassette (ABC) family that binds and hydrolyzes ATP to enable active transport of various substrates including many drugs, toxicants and endogenous compound across cell membranes. Transports a wide variety of conjugated organic anions such as sulfate-, glucuronide- and glutathione (GSH)-conjugates of endo- and xenobiotics substrates. Mediates hepatobiliary excretion of mono- and bis-glucuronidated bilirubin molecules and therefore play an important role in bilirubin detoxification. Also mediates hepatobiliary excretion of others glucuronide conjugates such as 17beta-estradiol 17-glucosiduronic acid and leukotriene C4. Transports sulfated bile salt such as taurolithocholate sulfate. Transports various anticancer drugs, such as anthracycline, vinca alkaloid and methotrexate and HIV-drugs such as protease inhibitors. Confers resistance to several anti-cancer drugs including cisplatin, doxorubicin, epirubicin, methotrexate, etoposide and vincristine. This chain is ATP-binding cassette sub-family C member 2, found in Homo sapiens (Human).